Here is a 684-residue protein sequence, read N- to C-terminus: Probable phosphoenolpyruvate synthase (684 aa).

Histidine 424 acts as the Tele-phosphohistidine intermediate in catalysis. Substrate contacts are provided by arginine 517, arginine 564, and glutamate 661. Residue glutamate 661 coordinates Mg(2+).

This sequence belongs to the PEP-utilizing enzyme family. The cofactor is Mg(2+).

It catalyses the reaction pyruvate + ATP + H2O = phosphoenolpyruvate + AMP + phosphate + 2 H(+). It participates in carbohydrate biosynthesis; gluconeogenesis. Functionally, catalyzes the phosphorylation of pyruvate to phosphoenolpyruvate. In Methanothermobacter thermautotrophicus (strain ATCC 29096 / DSM 1053 / JCM 10044 / NBRC 100330 / Delta H) (Methanobacterium thermoautotrophicum), this protein is Probable phosphoenolpyruvate synthase (ppsA).